The following is a 174-amino-acid chain: UPF0398 protein YfdB (174 aa).

The protein belongs to the UPF0398 family.

This chain is UPF0398 protein YfdB (yfdB), found in Lactococcus lactis subsp. lactis (strain IL1403) (Streptococcus lactis).